The following is a 162-amino-acid chain: 2-amino-4-hydroxy-6-hydroxymethyldihydropteridine pyrophosphokinase (162 aa).

It belongs to the HPPK family.

The enzyme catalyses 6-hydroxymethyl-7,8-dihydropterin + ATP = (7,8-dihydropterin-6-yl)methyl diphosphate + AMP + H(+). It participates in cofactor biosynthesis; tetrahydrofolate biosynthesis; 2-amino-4-hydroxy-6-hydroxymethyl-7,8-dihydropteridine diphosphate from 7,8-dihydroneopterin triphosphate: step 4/4. Functionally, catalyzes the transfer of pyrophosphate from adenosine triphosphate (ATP) to 6-hydroxymethyl-7,8-dihydropterin, an enzymatic step in folate biosynthesis pathway. The sequence is that of 2-amino-4-hydroxy-6-hydroxymethyldihydropteridine pyrophosphokinase (folK) from Streptococcus pyogenes serotype M3 (strain ATCC BAA-595 / MGAS315).